Consider the following 273-residue polypeptide: E3 ubiquitin-protein ligase SDIR1 (273 aa).

At 1 to 33 (MSFVFRGSRGDLESGFSGGFLPERRAMRVHGAR) the chain is on the cytoplasmic side. A helical membrane pass occupies residues 34–54 (PVNSNSLAFLVTVLLLFMILN). Over 55–56 (SH) the chain is Lumenal. A helical membrane pass occupies residues 57 to 77 (QMPPNFLLWLVLGVFLMATTL). The Cytoplasmic segment spans residues 78-273 (RMYATCQQLQ…EIDDDASDMV (196 aa)). The segment at 211 to 252 (CSVCLEQVTVGEIVRTLPCLHQFHAGCIDPWLRQQGTCPVCK) adopts an RING-type; atypical zinc-finger fold.

In terms of assembly, interacts with ATP1/SDIRIP1. In terms of tissue distribution, ubiquitous.

Its subcellular location is the endoplasmic reticulum membrane. It carries out the reaction S-ubiquitinyl-[E2 ubiquitin-conjugating enzyme]-L-cysteine + [acceptor protein]-L-lysine = [E2 ubiquitin-conjugating enzyme]-L-cysteine + N(6)-ubiquitinyl-[acceptor protein]-L-lysine.. In terms of biological role, E3 ubiquitin-protein ligase that acts as a positive regulator of abscisic acid-related stress signal transduction. Interacts with and ubiquitinates ATP1/SDIRIP1 to modulate ATP1/SDIRIP1 stability through the 26S proteasome pathway. Regulates abscisic acid (ABA) and salt stress responses by negatively affecting ATP1/SDIRIP1 stability. The SDIR1-ATP1/SDIRIP1 complex plays an important role in ABA signaling through the ubiquitination pathway. The sequence is that of E3 ubiquitin-protein ligase SDIR1 from Arabidopsis thaliana (Mouse-ear cress).